Here is a 294-residue protein sequence, read N- to C-terminus: Acetylglutamate kinase (294 aa).

Residues 64 to 65, R86, and N189 each bind substrate; that span reads GG.

The protein belongs to the acetylglutamate kinase family. ArgB subfamily.

The protein localises to the cytoplasm. The catalysed reaction is N-acetyl-L-glutamate + ATP = N-acetyl-L-glutamyl 5-phosphate + ADP. The protein operates within amino-acid biosynthesis; L-arginine biosynthesis; N(2)-acetyl-L-ornithine from L-glutamate: step 2/4. In terms of biological role, catalyzes the ATP-dependent phosphorylation of N-acetyl-L-glutamate. The chain is Acetylglutamate kinase from Carboxydothermus hydrogenoformans (strain ATCC BAA-161 / DSM 6008 / Z-2901).